The primary structure comprises 65 residues: Large ribosomal subunit protein bL35 (65 aa).

It belongs to the bacterial ribosomal protein bL35 family.

The protein is Large ribosomal subunit protein bL35 of Alkalilimnicola ehrlichii (strain ATCC BAA-1101 / DSM 17681 / MLHE-1).